The following is a 416-amino-acid chain: Formyl-CoA:oxalate CoA-transferase (416 aa).

Residues 17–18, arginine 38, 72–75, 96–98, histidine 104, and 137–140 each bind CoA; these read QS, LNTK, NFH, and KAYE. Aspartate 169 (nucleophile) is an active-site residue. 248–250 serves as a coordination point for substrate; the sequence is GGQ. Residue 273–275 coordinates CoA; that stretch reads QEQ.

The protein belongs to the CoA-transferase III family. Frc subfamily. In terms of assembly, homodimer.

It catalyses the reaction formyl-CoA + oxalate = oxalyl-CoA + formate. Its pathway is metabolic intermediate degradation; oxalate degradation; CO(2) and formate from oxalate: step 1/2. In terms of biological role, involved in the catabolism of oxalate and in the adapatation to low pH via the induction of the oxalate-dependent acid tolerance response (ATR). Catalyzes the transfer of the CoA moiety from formyl-CoA to oxalate. This is Formyl-CoA:oxalate CoA-transferase from Escherichia coli O17:K52:H18 (strain UMN026 / ExPEC).